Consider the following 430-residue polypeptide: Adenylosuccinate synthetase (430 aa).

GTP-binding positions include 12–18 (GDEGKGK) and 40–42 (GHT). D13 (proton acceptor) is an active-site residue. Positions 13 and 40 each coordinate Mg(2+). IMP is bound by residues 13 to 16 (DEGK), 38 to 41 (NAGH), T130, R144, Q224, T239, and R303. H41 (proton donor) is an active-site residue. 299 to 305 (VNTGRKR) contributes to the substrate binding site. GTP-binding positions include R305, 331 to 333 (KLD), and 413 to 415 (STS).

Belongs to the adenylosuccinate synthetase family. As to quaternary structure, homodimer. Requires Mg(2+) as cofactor.

Its subcellular location is the cytoplasm. The enzyme catalyses IMP + L-aspartate + GTP = N(6)-(1,2-dicarboxyethyl)-AMP + GDP + phosphate + 2 H(+). It functions in the pathway purine metabolism; AMP biosynthesis via de novo pathway; AMP from IMP: step 1/2. Plays an important role in the de novo pathway of purine nucleotide biosynthesis. Catalyzes the first committed step in the biosynthesis of AMP from IMP. The protein is Adenylosuccinate synthetase of Nitrobacter hamburgensis (strain DSM 10229 / NCIMB 13809 / X14).